We begin with the raw amino-acid sequence, 231 residues long: 2-C-methyl-D-erythritol 4-phosphate cytidylyltransferase (231 aa).

The protein belongs to the IspD/TarI cytidylyltransferase family. IspD subfamily.

The enzyme catalyses 2-C-methyl-D-erythritol 4-phosphate + CTP + H(+) = 4-CDP-2-C-methyl-D-erythritol + diphosphate. The protein operates within isoprenoid biosynthesis; isopentenyl diphosphate biosynthesis via DXP pathway; isopentenyl diphosphate from 1-deoxy-D-xylulose 5-phosphate: step 2/6. Functionally, catalyzes the formation of 4-diphosphocytidyl-2-C-methyl-D-erythritol from CTP and 2-C-methyl-D-erythritol 4-phosphate (MEP). The sequence is that of 2-C-methyl-D-erythritol 4-phosphate cytidylyltransferase from Lysinibacillus sphaericus (strain C3-41).